The chain runs to 326 residues: MSQVVVCALYKFVTLPHYESLRAPLLAVMEASDIRGTLLLAQEGINGTVAGTQAAIDGLLAWFDTQEGLDNIVSKVSFDAQMPFYRTKVKLKKEIVTMGVEGIDPRKVVGTYVKPKDWNALISDPDVILVDTRNDYEVQIGTFKHAVNPVTETFREFPEYVKQNLDPAKHKKVAMFCTGGIRCEKSTAYLKEQGFDEVYHLEGGILKYLEEVKQEESLWEGECFVFDNRVSVNHNLEKGVYDQCNACRMPITEQDKLLPSFVQGVSCPHCIDKIPQEQRQRFIERERQVQLARQRGEAHIGSDVKQVIATRREKKDSLRKAQNEQS.

Residues 123-217 enclose the Rhodanese domain; it reads SDPDVILVDT…YLEEVKQEES (95 aa). Cysteine 177 serves as the catalytic Cysteine persulfide intermediate.

Belongs to the TrhO family.

It carries out the reaction uridine(34) in tRNA + AH2 + O2 = 5-hydroxyuridine(34) in tRNA + A + H2O. Functionally, catalyzes oxygen-dependent 5-hydroxyuridine (ho5U) modification at position 34 in tRNAs. This is tRNA uridine(34) hydroxylase from Shewanella denitrificans (strain OS217 / ATCC BAA-1090 / DSM 15013).